Reading from the N-terminus, the 119-residue chain is C-C motif chemokine 24 (119 aa).

An N-terminal signal peptide occupies residues 1–26 (MAGLMTIVTSLLFLGVCAHHIIPTGS). 2 disulfides stabilise this stretch: cysteine 33/cysteine 58 and cysteine 34/cysteine 74. An N-linked (GlcNAc...) asparagine glycan is attached at asparagine 115.

It belongs to the intercrine beta (chemokine CC) family. Post-translationally, N-glycosylated. As to expression, activated monocytes and activated T lymphocytes.

It is found in the secreted. In terms of biological role, chemotactic for resting T-lymphocytes, and eosinophils. Has lower chemotactic activity for neutrophils but none for monocytes and activated lymphocytes. Is a strong suppressor of colony formation by a multipotential hematopoietic progenitor cell line. Binds to CCR3. The sequence is that of C-C motif chemokine 24 from Homo sapiens (Human).